A 232-amino-acid chain; its full sequence is Very-long-chain (3R)-3-hydroxyacyl-CoA dehydratase 4 (232 aa).

Topologically, residues 1-19 (MGPSVLPAWLQPRYRKNVY) are cytoplasmic. A helical transmembrane segment spans residues 20–40 (LFIYYLIQFCGHSWILANMTV). Residues 41 to 56 (RFFSFGKDSMADTFYA) lie on the Lumenal side of the membrane. The chain crosses the membrane as a helical span at residues 57 to 77 (IGLVMRVCQSISLLELLHIYI). The Cytoplasmic portion of the chain corresponds to 78-112 (GIESNQLFPRFLQLTERVIILFGVITSQEEVQEKC). The helical transmembrane segment at 113-133 (VVCVLFILWNLLDMVRYTYSM) threads the bilayer. The Lumenal portion of the chain corresponds to 134–135 (LS). A helical membrane pass occupies residues 136–156 (VIGTSYAALTWLSQTLWMPIY). Residue Tyr156 is part of the active site. Position 157 (Pro157) is a topological domain, cytoplasmic. The chain crosses the membrane as a helical span at residues 158-178 (LCVLAEAFTIYQSLPYFESFG). The active site involves Glu163. The Lumenal segment spans residues 179–189 (TNSTVLPFDLS). A helical membrane pass occupies residues 190–210 (TCFPYVLKLYLMMLFIGMYFT). Residues 211–232 (YSHLYTERKDFLRVFSVKQKNV) are Cytoplasmic-facing.

This sequence belongs to the very long-chain fatty acids dehydratase HACD family. May interact with enzymes of the ELO family (including ELOVL1); with those enzymes that mediate condensation, the first of the four steps of the reaction cycle responsible for fatty acids elongation, may be part of a larger fatty acids elongase complex.

Its subcellular location is the endoplasmic reticulum membrane. The enzyme catalyses a very-long-chain (3R)-3-hydroxyacyl-CoA = a very-long-chain (2E)-enoyl-CoA + H2O. The catalysed reaction is (3R)-hydroxyhexadecanoyl-CoA = (2E)-hexadecenoyl-CoA + H2O. The protein operates within lipid metabolism; fatty acid biosynthesis. Catalyzes the third of the four reactions of the long-chain fatty acids elongation cycle. This endoplasmic reticulum-bound enzymatic process, allows the addition of two carbons to the chain of long- and very long-chain fatty acids/VLCFAs per cycle. This enzyme catalyzes the dehydration of the 3-hydroxyacyl-CoA intermediate into trans-2,3-enoyl-CoA, within each cycle of fatty acid elongation. Thereby, it participates in the production of VLCFAs of different chain lengths that are involved in multiple biological processes as precursors of membrane lipids and lipid mediators. This chain is Very-long-chain (3R)-3-hydroxyacyl-CoA dehydratase 4, found in Mus musculus (Mouse).